We begin with the raw amino-acid sequence, 418 residues long: MTARRGSAPHRIATISVLTSPLAQPGGGDAGGLNVYVVETARRFAETGVQVDIFTRAAAPRLPPIVELCDGVVVRHVPAGPPREVDKGALPRVLGEFTAGMLRAPGDYDVVHAHHWLSGRVGALVARSRGVPLVQSMHSLGLVKNAVLPGEDGSAPPAQIAGESAVIAAADRLVANTAQEADQLIALYGAAPERVHTVHPGVDLELFRPGDRDQARARLGLPHDAFVLLFAGRVQRLKGPDILMRAAAQLLHADLDLAQRLVVAFVGGPSGELQADPDQLTKLATDLGIGEQVRVEPPCPHPELADWYRAATLVVVPSRAETFGLVAVEAQACGTPVVAAAVGGLQTAVRAGVSGVLVEGHDPARYAEVIRALIDDPARLTALRAGALQHAAGFGWSEAVDRLLAVYRSAIEGGRGRP.

Residues 24–25 (QP) and G32 each bind UDP-N-acetyl-alpha-D-glucosamine. Residues 29–34 (DAGGLN), K87, H115, S139, and Q159 contribute to the 1D-myo-inositol 3-phosphate site. The UDP-N-acetyl-alpha-D-glucosamine site is built by R233 and K238. Residues Y308, R309, and A311 each coordinate Mg(2+). 2 residues coordinate UDP-N-acetyl-alpha-D-glucosamine: E321 and E329. T335 serves as a coordination point for Mg(2+).

Belongs to the glycosyltransferase group 1 family. MshA subfamily. In terms of assembly, homodimer.

The catalysed reaction is 1D-myo-inositol 3-phosphate + UDP-N-acetyl-alpha-D-glucosamine = 1D-myo-inositol 2-acetamido-2-deoxy-alpha-D-glucopyranoside 3-phosphate + UDP + H(+). Its function is as follows. Catalyzes the transfer of a N-acetyl-glucosamine moiety to 1D-myo-inositol 3-phosphate to produce 1D-myo-inositol 2-acetamido-2-deoxy-glucopyranoside 3-phosphate in the mycothiol biosynthesis pathway. The chain is D-inositol 3-phosphate glycosyltransferase 1 from Catenulispora acidiphila (strain DSM 44928 / JCM 14897 / NBRC 102108 / NRRL B-24433 / ID139908).